A 178-amino-acid chain; its full sequence is Ribosomal RNA small subunit methyltransferase G (178 aa).

S-adenosyl-L-methionine-binding positions include Gly54, Leu59, 105–106 (LE), and Arg120.

Belongs to the methyltransferase superfamily. RNA methyltransferase RsmG family.

The protein localises to the cytoplasm. It catalyses the reaction guanosine(527) in 16S rRNA + S-adenosyl-L-methionine = N(7)-methylguanosine(527) in 16S rRNA + S-adenosyl-L-homocysteine. Specifically methylates the N7 position of guanine in position 527 of 16S rRNA. The polypeptide is Ribosomal RNA small subunit methyltransferase G (Helicobacter pylori (strain HPAG1)).